We begin with the raw amino-acid sequence, 536 residues long: Phosphoenolpyruvate carboxykinase (ATP) (536 aa).

The substrate site is built by Arg61, Tyr195, and Lys201. Residues Lys201, His220, and 236–244 each bind ATP; that span reads GLSGTGKTT. Mn(2+) is bound by residues Lys201 and His220. Asp257 contributes to the Mn(2+) binding site. The ATP site is built by Glu285, Arg323, and Thr448. Arg323 lines the substrate pocket.

Belongs to the phosphoenolpyruvate carboxykinase (ATP) family. Mn(2+) is required as a cofactor.

It is found in the cytoplasm. The enzyme catalyses oxaloacetate + ATP = phosphoenolpyruvate + ADP + CO2. The protein operates within carbohydrate biosynthesis; gluconeogenesis. Its function is as follows. Involved in the gluconeogenesis. Catalyzes the conversion of oxaloacetate (OAA) to phosphoenolpyruvate (PEP) through direct phosphoryl transfer between the nucleoside triphosphate and OAA. The polypeptide is Phosphoenolpyruvate carboxykinase (ATP) (Methylobacterium nodulans (strain LMG 21967 / CNCM I-2342 / ORS 2060)).